We begin with the raw amino-acid sequence, 1024 residues long: Carbamoyl phosphate synthase large chain (1024 aa).

The tract at residues 1-402 (MPKRTDLQTI…SLQKALRSTE (402 aa)) is carboxyphosphate synthetic domain. Positions 129, 169, 175, 176, 208, 210, 215, 241, 242, 243, 285, and 299 each coordinate ATP. The 196-residue stretch at 133–328 (QAAMKKIGVE…IAKIAALLAV (196 aa)) folds into the ATP-grasp 1 domain. The Mg(2+) site is built by Gln-285, Glu-299, and Asn-301. Mn(2+) contacts are provided by Gln-285, Glu-299, and Asn-301. The segment at 403 to 546 (GDIRGVYAEM…YSTYEWEDEV (144 aa)) is oligomerization domain. Residues 547–929 (APTDKPKVVI…AFYRAQLGAK (383 aa)) form a carbamoyl phosphate synthetic domain region. Positions 671–863 (NALCERLGLP…LAKSAARIAA (193 aa)) constitute an ATP-grasp 2 domain. Positions 707, 747, 749, 754, 779, 780, 781, 782, 822, and 834 each coordinate ATP. Mg(2+) contacts are provided by Gln-822, Glu-834, and Asn-836. Mn(2+) contacts are provided by Gln-822, Glu-834, and Asn-836. Residues 930-1024 (NYLPLEGTAL…GVRSLQEWVK (95 aa)) form the MGS-like domain. The segment at 930–1024 (NYLPLEGTAL…GVRSLQEWVK (95 aa)) is allosteric domain.

It belongs to the CarB family. Composed of two chains; the small (or glutamine) chain promotes the hydrolysis of glutamine to ammonia, which is used by the large (or ammonia) chain to synthesize carbamoyl phosphate. Tetramer of heterodimers (alpha,beta)4. It depends on Mg(2+) as a cofactor. Mn(2+) serves as cofactor.

The enzyme catalyses hydrogencarbonate + L-glutamine + 2 ATP + H2O = carbamoyl phosphate + L-glutamate + 2 ADP + phosphate + 2 H(+). The catalysed reaction is hydrogencarbonate + NH4(+) + 2 ATP = carbamoyl phosphate + 2 ADP + phosphate + 2 H(+). It functions in the pathway amino-acid biosynthesis; L-arginine biosynthesis; carbamoyl phosphate from bicarbonate: step 1/1. It participates in pyrimidine metabolism; UMP biosynthesis via de novo pathway; (S)-dihydroorotate from bicarbonate: step 1/3. In terms of biological role, large subunit of the glutamine-dependent carbamoyl phosphate synthetase (CPSase). CPSase catalyzes the formation of carbamoyl phosphate from the ammonia moiety of glutamine, carbonate, and phosphate donated by ATP, constituting the first step of 2 biosynthetic pathways, one leading to arginine and/or urea and the other to pyrimidine nucleotides. The large subunit (synthetase) binds the substrates ammonia (free or transferred from glutamine from the small subunit), hydrogencarbonate and ATP and carries out an ATP-coupled ligase reaction, activating hydrogencarbonate by forming carboxy phosphate which reacts with ammonia to form carbamoyl phosphate. This Deinococcus radiodurans (strain ATCC 13939 / DSM 20539 / JCM 16871 / CCUG 27074 / LMG 4051 / NBRC 15346 / NCIMB 9279 / VKM B-1422 / R1) protein is Carbamoyl phosphate synthase large chain.